The sequence spans 180 residues: Large ribosomal subunit protein uL10 (180 aa).

The interval 161 to 180 is disordered; it reads SKAEGSEETESNETTETVEE. Positions 166 to 180 are enriched in acidic residues; it reads SEETESNETTETVEE.

This sequence belongs to the universal ribosomal protein uL10 family. As to quaternary structure, part of the ribosomal stalk of the 50S ribosomal subunit. The N-terminus interacts with L11 and the large rRNA to form the base of the stalk. The C-terminus forms an elongated spine to which L12 dimers bind in a sequential fashion forming a multimeric L10(L12)X complex.

Forms part of the ribosomal stalk, playing a central role in the interaction of the ribosome with GTP-bound translation factors. This chain is Large ribosomal subunit protein uL10, found in Finegoldia magna (strain ATCC 29328 / DSM 20472 / WAL 2508) (Peptostreptococcus magnus).